The sequence spans 299 residues: Ribosomal protein L11 methyltransferase (299 aa).

Residues threonine 150, glycine 171, aspartate 193, and asparagine 234 each contribute to the S-adenosyl-L-methionine site.

The protein belongs to the methyltransferase superfamily. PrmA family.

It localises to the cytoplasm. The enzyme catalyses L-lysyl-[protein] + 3 S-adenosyl-L-methionine = N(6),N(6),N(6)-trimethyl-L-lysyl-[protein] + 3 S-adenosyl-L-homocysteine + 3 H(+). Functionally, methylates ribosomal protein L11. The sequence is that of Ribosomal protein L11 methyltransferase from Dictyoglomus turgidum (strain DSM 6724 / Z-1310).